We begin with the raw amino-acid sequence, 436 residues long: Phosphomethylpyrimidine synthase (436 aa).

Substrate is bound by residues asparagine 69, methionine 98, tyrosine 127, histidine 163, 185 to 187 (SRG), 226 to 229 (DACR), and glutamate 265. Histidine 269 contacts Zn(2+). Tyrosine 292 serves as a coordination point for substrate. Histidine 333 contacts Zn(2+). Residues cysteine 409, cysteine 412, and cysteine 416 each contribute to the [4Fe-4S] cluster site.

This sequence belongs to the ThiC family. It depends on [4Fe-4S] cluster as a cofactor.

It catalyses the reaction 5-amino-1-(5-phospho-beta-D-ribosyl)imidazole + S-adenosyl-L-methionine = 4-amino-2-methyl-5-(phosphooxymethyl)pyrimidine + CO + 5'-deoxyadenosine + formate + L-methionine + 3 H(+). It functions in the pathway cofactor biosynthesis; thiamine diphosphate biosynthesis. Catalyzes the synthesis of the hydroxymethylpyrimidine phosphate (HMP-P) moiety of thiamine from aminoimidazole ribotide (AIR) in a radical S-adenosyl-L-methionine (SAM)-dependent reaction. The sequence is that of Phosphomethylpyrimidine synthase from Clostridium perfringens (strain ATCC 13124 / DSM 756 / JCM 1290 / NCIMB 6125 / NCTC 8237 / Type A).